The following is a 420-amino-acid chain: MSSETVSYFSHPFPRRQSVGVSVGGVIVGGSAPVVVQSMTNTDTADVDSTVAQVAALHRAGSEIVRITVDRDESAAAVPKIRERLERLGHDVPLVGDFHYIGHKLLADHPACAEALAKYRINPGNVGFKDKKDKQFADIVEMAIRYDKPVRIGVNWGSLDQELLTTLMDRNQAEGAPLSAQDVMREAIVQSALISANLAEEIGLGRDKIILSAKVSQVQDLIAVYTMLAQRSNHALHLGLTEAGMGTKGIVASSAAMGILLQQGIGDTIRISLTPEPGGDRTREVQVAQELLQTMGFRQFVPIVAACPGCGRTTSTVFQELAQTIQEDIRRNMPLWREKYPGVEALSVAVMGCIVNGPGESKHADIGISLPGTGETPSAPVFVDGKKVATLRGPGIAEDFQKMVADYIENRFGLGRKIAS.

Residues cysteine 307, cysteine 310, cysteine 353, and glutamate 360 each coordinate [4Fe-4S] cluster.

It belongs to the IspG family. [4Fe-4S] cluster serves as cofactor.

The enzyme catalyses (2E)-4-hydroxy-3-methylbut-2-enyl diphosphate + oxidized [flavodoxin] + H2O + 2 H(+) = 2-C-methyl-D-erythritol 2,4-cyclic diphosphate + reduced [flavodoxin]. Its pathway is isoprenoid biosynthesis; isopentenyl diphosphate biosynthesis via DXP pathway; isopentenyl diphosphate from 1-deoxy-D-xylulose 5-phosphate: step 5/6. Converts 2C-methyl-D-erythritol 2,4-cyclodiphosphate (ME-2,4cPP) into 1-hydroxy-2-methyl-2-(E)-butenyl 4-diphosphate. The polypeptide is 4-hydroxy-3-methylbut-2-en-1-yl diphosphate synthase (flavodoxin) (Brucella suis biovar 1 (strain 1330)).